The chain runs to 440 residues: D-serine dehydratase (440 aa).

K116 is modified (N6-(pyridoxal phosphate)lysine).

The protein belongs to the serine/threonine dehydratase family. DsdA subfamily. As to quaternary structure, monomer. Pyridoxal 5'-phosphate is required as a cofactor.

The catalysed reaction is D-serine = pyruvate + NH4(+). The sequence is that of D-serine dehydratase from Salmonella agona (strain SL483).